We begin with the raw amino-acid sequence, 301 residues long: Putative S-adenosyl-L-methionine-dependent methyltransferase MUL_0450 (301 aa).

S-adenosyl-L-methionine-binding positions include Asp127 and 156-157; that span reads DL.

It belongs to the UPF0677 family.

In terms of biological role, exhibits S-adenosyl-L-methionine-dependent methyltransferase activity. In Mycobacterium ulcerans (strain Agy99), this protein is Putative S-adenosyl-L-methionine-dependent methyltransferase MUL_0450.